The primary structure comprises 630 residues: Conserved oligomeric Golgi complex subunit 6 (630 aa).

It belongs to the COG6 family. Component of the conserved oligomeric Golgi complex which is composed of eight different subunits and is required for normal Golgi morphology and localization.

It is found in the golgi apparatus membrane. Required for normal Golgi function. The chain is Conserved oligomeric Golgi complex subunit 6 from Drosophila melanogaster (Fruit fly).